Here is a 170-residue protein sequence, read N- to C-terminus: ATP synthase subunit b (170 aa).

Residues 3 to 23 (IKILFFLALPFLAYASEHGGT) form a helical membrane-spanning segment.

This sequence belongs to the ATPase B chain family. F-type ATPases have 2 components, F(1) - the catalytic core - and F(0) - the membrane proton channel. F(1) has five subunits: alpha(3), beta(3), gamma(1), delta(1), epsilon(1). F(0) has three main subunits: a(1), b(2) and c(10-14). The alpha and beta chains form an alternating ring which encloses part of the gamma chain. F(1) is attached to F(0) by a central stalk formed by the gamma and epsilon chains, while a peripheral stalk is formed by the delta and b chains.

The protein resides in the cell inner membrane. F(1)F(0) ATP synthase produces ATP from ADP in the presence of a proton or sodium gradient. F-type ATPases consist of two structural domains, F(1) containing the extramembraneous catalytic core and F(0) containing the membrane proton channel, linked together by a central stalk and a peripheral stalk. During catalysis, ATP synthesis in the catalytic domain of F(1) is coupled via a rotary mechanism of the central stalk subunits to proton translocation. Functionally, component of the F(0) channel, it forms part of the peripheral stalk, linking F(1) to F(0). The sequence is that of ATP synthase subunit b from Campylobacter concisus (strain 13826).